Here is a 306-residue protein sequence, read N- to C-terminus: Protein SEC13 homolog (306 aa).

6 WD repeats span residues 11–50, 56–97, 102–143, 150–195, 202–245, and 252–291; these read QHRD…QSYP, GHNG…WQKT, THEA…QQWQ, CHDQ…NEWT, CHKD…TAEW, and QAPC…QWIK.

Belongs to the WD repeat SEC13 family. As to quaternary structure, probably part of the GATOR complex.

It localises to the cytoplasmic vesicle. Its subcellular location is the COPII-coated vesicle membrane. The protein localises to the endoplasmic reticulum membrane. The protein resides in the nucleus. It is found in the nuclear pore complex. It localises to the lysosome membrane. Functionally, functions as a component of the nuclear pore complex (NPC) and the COPII coat. Its function is as follows. As a component of the GATOR complex may function in the amino acid-sensing branch of the TORC1 signaling pathway. The protein is Protein SEC13 homolog of Caenorhabditis briggsae.